The following is an 807-amino-acid chain: Probable E3 ubiquitin-protein ligase mug30 (807 aa).

The HECT domain maps to 453–807; sequence RNKDFRKALK…LLETNGFNIR (355 aa). The active-site Glycyl thioester intermediate is the Cys-775.

The protein resides in the cytoplasm. Its subcellular location is the cytoskeleton. It localises to the microtubule organizing center. The protein localises to the spindle pole body. It catalyses the reaction S-ubiquitinyl-[E2 ubiquitin-conjugating enzyme]-L-cysteine + [acceptor protein]-L-lysine = [E2 ubiquitin-conjugating enzyme]-L-cysteine + N(6)-ubiquitinyl-[acceptor protein]-L-lysine.. Its pathway is protein modification; protein ubiquitination. Probable E3 ubiquitin-protein ligase. Has a role in meiosis. The sequence is that of Probable E3 ubiquitin-protein ligase mug30 (mug30) from Schizosaccharomyces pombe (strain 972 / ATCC 24843) (Fission yeast).